The following is a 551-amino-acid chain: Colicin-E6 (551 aa).

Disordered regions lie at residues 1 to 74 (MSGG…SGGG), 244 to 269 (LSPGVTNNTDKDVRPAGFTQGGNTRD), 293 to 317 (PDQVKQRQDEENRRQQEWDATHPVE), 406 to 501 (NKQA…WYGD), and 517 to 551 (EGYRASDGQHLGSFEPKTGNQLKGPDPKRNIKKYL). Residues 20-35 (INGGPTGLGVGGGASD) are compositionally biased toward gly residues. The segment covering 36–45 (GSGWSSENNP) has biased composition (low complexity). Residues 46-74 (WGGGSGSGIHWGGGSGHGNGGGNGNSGGG) show a composition bias toward gly residues. Basic and acidic residues-rich tracts occupy residues 296 to 317 (VKQRQDEENRRQQEWDATHPVE) and 430 to 484 (ESRK…EGKP). The ribosome inactivating activity stretch occupies residues 455–551 (KGVKDYGHDY…DPKRNIKKYL (97 aa)). Positions 530-551 (FEPKTGNQLKGPDPKRNIKKYL) are binding of immunity protein.

This sequence belongs to the cloacin colicin family.

In terms of biological role, inactivates ribosomes by hydrolyzing 16S RNA in 30S ribosomes at a specific site. Functionally, colicins are polypeptide toxins produced by and active against E.coli and closely related bacteria. This chain is Colicin-E6, found in Escherichia coli.